A 132-amino-acid polypeptide reads, in one-letter code: Small ribosomal subunit protein eS24 (132 aa).

Positions Arg90–Lys100 are enriched in basic and acidic residues. Residues Arg90–Asp132 are disordered. Basic residues predominate over residues Lys101–Lys121.

This sequence belongs to the eukaryotic ribosomal protein eS24 family. As to quaternary structure, component of the small ribosomal subunit.

Its subcellular location is the cytoplasm. In terms of biological role, component of the small ribosomal subunit. The ribosome is a large ribonucleoprotein complex responsible for the synthesis of proteins in the cell. Required for processing of pre-rRNA and maturation of 40S ribosomal subunits. The protein is Small ribosomal subunit protein eS24 (rps24) of Takifugu rubripes (Japanese pufferfish).